The following is a 442-amino-acid chain: tRNA-2-methylthio-N(6)-dimethylallyladenosine synthase (442 aa).

The MTTase N-terminal domain maps to 3–120 (KKLYIETHGC…LPEMIDAARV (118 aa)). The [4Fe-4S] cluster site is built by C12, C49, C83, C157, C161, and C164. Residues 143-375 (RVDGPSAYVS…QHRLNQQGFE (233 aa)) form the Radical SAM core domain. The TRAM domain occupies 378–442 (RQMVGSIQRI…PHSLRGSLLQ (65 aa)).

The protein belongs to the methylthiotransferase family. MiaB subfamily. In terms of assembly, monomer. Requires [4Fe-4S] cluster as cofactor.

It is found in the cytoplasm. The catalysed reaction is N(6)-dimethylallyladenosine(37) in tRNA + (sulfur carrier)-SH + AH2 + 2 S-adenosyl-L-methionine = 2-methylsulfanyl-N(6)-dimethylallyladenosine(37) in tRNA + (sulfur carrier)-H + 5'-deoxyadenosine + L-methionine + A + S-adenosyl-L-homocysteine + 2 H(+). Catalyzes the methylthiolation of N6-(dimethylallyl)adenosine (i(6)A), leading to the formation of 2-methylthio-N6-(dimethylallyl)adenosine (ms(2)i(6)A) at position 37 in tRNAs that read codons beginning with uridine. This chain is tRNA-2-methylthio-N(6)-dimethylallyladenosine synthase, found in Pseudomonas syringae pv. syringae (strain B728a).